The following is a 382-amino-acid chain: Succinate--CoA ligase [ADP-forming] subunit beta 1 (382 aa).

One can recognise an ATP-grasp domain in the interval lysine 9 to glutamate 235. ATP is bound by residues lysine 45, glycine 52 to glycine 54, glutamate 91, leucine 94, and glutamate 99. Residues asparagine 191 and aspartate 204 each contribute to the Mg(2+) site. Asparagine 255 is a substrate binding site.

The protein belongs to the succinate/malate CoA ligase beta subunit family. In terms of assembly, heterotetramer of two alpha and two beta subunits. The cofactor is Mg(2+).

The enzyme catalyses succinate + ATP + CoA = succinyl-CoA + ADP + phosphate. It catalyses the reaction GTP + succinate + CoA = succinyl-CoA + GDP + phosphate. The protein operates within carbohydrate metabolism; tricarboxylic acid cycle; succinate from succinyl-CoA (ligase route): step 1/1. In terms of biological role, succinyl-CoA synthetase functions in the citric acid cycle (TCA), coupling the hydrolysis of succinyl-CoA to the synthesis of either ATP or GTP and thus represents the only step of substrate-level phosphorylation in the TCA. The beta subunit provides nucleotide specificity of the enzyme and binds the substrate succinate, while the binding sites for coenzyme A and phosphate are found in the alpha subunit. This Archaeoglobus fulgidus (strain ATCC 49558 / DSM 4304 / JCM 9628 / NBRC 100126 / VC-16) protein is Succinate--CoA ligase [ADP-forming] subunit beta 1.